The primary structure comprises 880 residues: MEKLAAGLAGLRWSMGAFPLDLIVSRCRLPTLACLGPGEYAEGVSERDILLIHSCRQWTTVTAHTLEEGHYVIGPKIDIPLQYPGKFKLLEQARDVREPVRYFSSVEEVASVFPDRIFVMEAITFSVKVVSGEFSEDSEVYNFTLHAGDELTLMGQAEILCAKTTKERSRFTTLLRKLGRAGALAGIGGPGSMGATGGGGGAARPVKSKMPCLICMNHRTNESLSLPFQCQGRFSTRSPLELQMQEGEHTVRAIIERVRLPVNVLVPSRPPRNPYDLHPVREGHCYKLVSIISKTVVLGLALRREGPAPLHFLLLTDTPRFTLPQGLLAGDPRVERLVRDSASYCRERFDPDEYSTAVREAPAELSDDCASPRHARLCLPAPRAPGAVRAPGPPGRLGPALPAPGDSDQDYVSPDWAGVSEPAGGCAEIPYEELWVHQAPESRADARARPLAGPDLISFGIVGPPRHEPEAPPPPVPPKSEAVKEECRLLHAPPVPPRGGGSCSKLTGSPPVLPHFPKLQPVHSPSSSLSYYSSGLQDGAGSRSGSGSPSPDAYSLYCYPCTWGDCKASESSSRPPPGPLPSTTTQPSQASRGLSEPLSGRTPSLLGADTPVVKNYHSCPPLFKSSRPQKSFAPFGALNPFSGPAHPSGAPAASSSGSISTSGVLATSSPTHSPGPGPGPQGQGYSAAPSSSLSSSEWQEPALEPLDPFELGQASPPELELVRCQEPRAAGAPGSGPCLSPLGQPKAFEPEGLVLRQVPASLSPAALQGPEAGGTLLFLTQGCLEGPPGSPREGATGAGVRDASSWQPPADLSALSLEEVSRSLRFIGLSEDVVSFFARERIDGSIFVQLSEDILADDFHLTKLQVKKIMQFIKGWRPKI.

Residues 12-320 (RWSMGAFPLD…HFLLLTDTPR (309 aa)) are CABIT. Disordered stretches follow at residues 385 to 407 (PGAV…PGDS), 461 to 483 (IVGP…SEAV), 527 to 548 (SSLS…GSGS), 569 to 611 (SESS…ADTP), and 633 to 713 (APFG…ELGQ). Low complexity-rich tracts occupy residues 640 to 663 (PFSG…STSG) and 683 to 696 (QGYS…LSSS). A Phosphoserine modification is found at S740. The SAM domain maps to 813 to 877 (SALSLEEVSR…KIMQFIKGWR (65 aa)).

The protein belongs to the GAREM family.

In terms of biological role, probable adapter protein that provides a critical link between cell surface epidermal growth factor receptor and the MAPK/ERK signaling pathway. The sequence is that of GRB2-associated and regulator of MAPK protein 2 (Garem2) from Mus musculus (Mouse).